The sequence spans 240 residues: Small ribosomal subunit protein uS3 (240 aa).

Positions 39 to 108 constitute a KH type-2 domain; sequence LRKFLKKKLY…ELILNIKEER (70 aa). A compositionally biased stretch (basic and acidic residues) spans 213-224; it reads MNSDDTATPERK. The tract at residues 213-240 is disordered; it reads MNSDDTATPERKAPRRRKGRRNVNAKKN. The segment covering 225-240 has biased composition (basic residues); the sequence is APRRRKGRRNVNAKKN.

It belongs to the universal ribosomal protein uS3 family. Part of the 30S ribosomal subunit. Forms a tight complex with proteins S10 and S14.

Functionally, binds the lower part of the 30S subunit head. Binds mRNA in the 70S ribosome, positioning it for translation. The sequence is that of Small ribosomal subunit protein uS3 from Nautilia profundicola (strain ATCC BAA-1463 / DSM 18972 / AmH).